Here is a 267-residue protein sequence, read N- to C-terminus: Glutamate 5-kinase (267 aa).

ATP is bound at residue Lys-14. Substrate-binding residues include Ser-54, Asp-141, and Asn-157. Residues 177-178 (SD) and 219-225 (TGGMMSK) contribute to the ATP site.

It belongs to the glutamate 5-kinase family.

Its subcellular location is the cytoplasm. The catalysed reaction is L-glutamate + ATP = L-glutamyl 5-phosphate + ADP. Its pathway is amino-acid biosynthesis; L-proline biosynthesis; L-glutamate 5-semialdehyde from L-glutamate: step 1/2. Functionally, catalyzes the transfer of a phosphate group to glutamate to form L-glutamate 5-phosphate. In Streptococcus thermophilus, this protein is Glutamate 5-kinase.